Here is a 971-residue protein sequence, read N- to C-terminus: Exportin-2 (971 aa).

Methionine 1 carries the N-acetylmethionine modification. The Importin N-terminal domain maps to 29-102; sequence AEKFLESVEG…KANIVHLMLS (74 aa). Serine 112 carries the post-translational modification Phosphoserine. N6-acetyllysine occurs at positions 574 and 824. Serine 931 carries the phosphoserine modification.

Belongs to the XPO2/CSE1 family. Found in a complex with CSE1L/XPO2, Ran and KPNA2. Binds with high affinity to importin-alpha only in the presence of RanGTP. The complex is dissociated by the combined action of RanBP1 and RanGAP1. Interacts with CFTR. In terms of tissue distribution, detected in brain, placenta, ovary, testis and trachea (at protein level). Widely expressed. Highly expressed in testis and in proliferating cells.

The protein localises to the cytoplasm. Its subcellular location is the nucleus. In terms of biological role, export receptor for importin-alpha. Mediates importin-alpha re-export from the nucleus to the cytoplasm after import substrates (cargos) have been released into the nucleoplasm. In the nucleus binds cooperatively to importin-alpha and to the GTPase Ran in its active GTP-bound form. Docking of this trimeric complex to the nuclear pore complex (NPC) is mediated through binding to nucleoporins. Upon transit of a nuclear export complex into the cytoplasm, disassembling of the complex and hydrolysis of Ran-GTP to Ran-GDP (induced by RANBP1 and RANGAP1, respectively) cause release of the importin-alpha from the export receptor. CSE1L/XPO2 then return to the nuclear compartment and mediate another round of transport. The directionality of nuclear export is thought to be conferred by an asymmetric distribution of the GTP- and GDP-bound forms of Ran between the cytoplasm and nucleus. The sequence is that of Exportin-2 (CSE1L) from Homo sapiens (Human).